A 488-amino-acid chain; its full sequence is Glutamyl-tRNA(Gln) amidotransferase subunit A, mitochondrial (488 aa).

Residues Lys62 and Ser140 each act as charge relay system in the active site. Ser164 functions as the Acyl-ester intermediate in the catalytic mechanism. Residues 205 to 228 form a disordered region; the sequence is GHDDNDPTSITPQTRERIQDRLSR. Over residues 218-227 the composition is skewed to basic and acidic residues; the sequence is TRERIQDRLS.

The protein belongs to the amidase family. GatA subfamily. Subunit of the heterotrimeric GatCAB amidotransferase (AdT) complex, composed of A, B and C subunits.

It localises to the mitochondrion. The catalysed reaction is L-glutamyl-tRNA(Gln) + L-glutamine + ATP + H2O = L-glutaminyl-tRNA(Gln) + L-glutamate + ADP + phosphate + H(+). Its function is as follows. Allows the formation of correctly charged Gln-tRNA(Gln) through the transamidation of misacylated Glu-tRNA(Gln) in the mitochondria. The reaction takes place in the presence of glutamine and ATP through an activated gamma-phospho-Glu-tRNA(Gln). This is Glutamyl-tRNA(Gln) amidotransferase subunit A, mitochondrial from Tuber melanosporum (strain Mel28) (Perigord black truffle).